The chain runs to 118 residues: Large ribosomal subunit protein bL20 (118 aa).

The protein belongs to the bacterial ribosomal protein bL20 family.

Functionally, binds directly to 23S ribosomal RNA and is necessary for the in vitro assembly process of the 50S ribosomal subunit. It is not involved in the protein synthesizing functions of that subunit. This Trichodesmium erythraeum (strain IMS101) protein is Large ribosomal subunit protein bL20.